A 728-amino-acid chain; its full sequence is Probable 3',5'-cyclic phosphodiesterase pde-5 (728 aa).

The GAF domain occupies 214-371 (SMDAVIIKVM…HHAKLYDKIR (158 aa)). Residues 390–709 (CNADEVNKLK…KKWEELAEEQ (320 aa)) form the PDEase domain. The active-site Proton donor is the H465. A divalent metal cation contacts are provided by H469, H503, D504, and D614. Residues 691–728 (MRERCEYNAKKWEELAEEQRKKQEALAQQNGEANETQE) are a coiled coil. A disordered region spans residues 708 to 728 (EQRKKQEALAQQNGEANETQE). Residues 716–728 (LAQQNGEANETQE) show a composition bias toward polar residues.

Belongs to the cyclic nucleotide phosphodiesterase family. Requires a divalent metal cation as cofactor.

The catalysed reaction is a nucleoside 3',5'-cyclic phosphate + H2O = a nucleoside 5'-phosphate + H(+). Redundantly with pde-1, plays a role in the AFD thermosensory neurons to regulate microvilli receptive ending morphology, possibly by regulating cGMP levels. This Caenorhabditis elegans protein is Probable 3',5'-cyclic phosphodiesterase pde-5 (pde-5).